A 423-amino-acid chain; its full sequence is Voltage-dependent calcium channel gamma-8 subunit (423 aa).

The next 4 helical transmembrane spans lie at 19 to 39, 127 to 147, 157 to 177, and 207 to 227; these read VQVL…TIAI, SSIF…CVAA, IILG…IGVI, and FGGL…NIYI. Residues serine 251 and serine 254 each carry the phosphoserine modification. The segment at 271 to 304 is disordered; that stretch reads RRSRSSSRGSSEASPSRDASPGGPGGPGFASTDI. The segment covering 276-287 has biased composition (low complexity); the sequence is SSRGSSEASPSR. Residues 318–338 form a helical membrane-spanning segment; sequence VAAGLASAGGGGSGAGVGAYG. Disordered regions lie at residues 342-363 and 378-423; these read GAAG…GFLT and VTVT…TTPV. Pro residues predominate over residues 384 to 399; sequence PAAPAPAPAPPAPAAP. Residues 410 to 423 show a composition bias toward polar residues; the sequence is ASNTNTLNRKTTPV.

This sequence belongs to the PMP-22/EMP/MP20 family. CACNG subfamily. In terms of assembly, interacts with CACNA1C. Identified in a complex with the L-type calcium channel subunits CACNA1C, CACNA2D1 and either CACNB1 or CACNB2. Acts as an auxiliary subunit for AMPA-selective glutamate receptors (AMPARs). Found in a complex with GRIA1, GRIA2, GRIA3, GRIA4, CNIH2, CNIH3, CACNG2, CACNG3, CACNG4, CACNG5 and CACNG7. Interacts with CNIH2. Found in a complex with GRIA1, GRIA2, GRIA3, GRIA4, DLG4 and CNIH2. Post-translationally, palmitoylated. Probably palmitoylated by ZDHHC3 and ZDHHC7.

The protein resides in the cell membrane. It localises to the postsynaptic density membrane. Regulates the activity of L-type calcium channels that contain CACNA1C as pore-forming subunit. Regulates the trafficking and gating properties of AMPA-selective glutamate receptors (AMPARs). Promotes their targeting to the cell membrane and synapses and modulates their gating properties by slowing their rates of activation, deactivation and desensitization and by mediating their resensitization. Does not show subunit-specific AMPA receptor regulation and regulates all AMPAR subunits. Thought to stabilize the calcium channel in an inactivated (closed) state. The polypeptide is Voltage-dependent calcium channel gamma-8 subunit (Mus musculus (Mouse)).